The chain runs to 446 residues: High mobility group B protein 13 (446 aa).

Disordered stretches follow at residues 1–43 (MSTV…TKSF) and 110–130 (LAQTEEEKKGKKKKKDCAETK). Over residues 11 to 22 (AKKSRNSRKALK) the composition is skewed to basic residues. 2 DNA-binding regions (HMG box) span residues 129–197 (TKRP…TKEK) and 246–312 (PKQP…EGYK). Positions 349-371 (NIIKKTKETAKNKKKNENVDPNK) are enriched in basic and acidic residues. The interval 349-377 (NIIKKTKETAKNKKKNENVDPNKPKKPTS) is disordered. The segment at residues 372-440 (PKKPTSSYFL…AYKKEVEEYN (69 aa)) is a DNA-binding region (HMG box 3).

It belongs to the HMGB family.

Its subcellular location is the nucleus. The chain is High mobility group B protein 13 (HMGB13) from Arabidopsis thaliana (Mouse-ear cress).